The following is a 275-amino-acid chain: Myoblast determination protein 1 homolog (275 aa).

The region spanning 84 to 135 (DRRKAATMRERRRLSKVNDAFETLKRCTSTNPNQRLPKVEILRNAISYIESL) is the bHLH domain. The segment at 234–275 (EGHEESPCSPHEGSVLSDTGTTAPSPTSCPQQQAQETIYQVL) is disordered. Residues 249-275 (LSDTGTTAPSPTSCPQQQAQETIYQVL) show a composition bias toward polar residues.

As to quaternary structure, efficient DNA binding requires dimerization with another bHLH protein. As to expression, from mid-gastrula to just before somite formation, expressed in cells adjacent to axial mesoderm. Subsequently, during the anterior-to-posterior wave of somite formation and maturation, expressed within particular regions of each somite. Expressed in both muscle and non-muscle cells.

The protein resides in the nucleus. Its function is as follows. May act as a transcriptional activator that promotes transcription of muscle-specific target genes and plays a role in muscle differentiation. This chain is Myoblast determination protein 1 homolog (myod1), found in Danio rerio (Zebrafish).